The chain runs to 349 residues: Small ribosomal subunit biogenesis GTPase RsgA 2 (349 aa).

The region spanning 97 to 252 (AEQLIATNVD…IIDTPGMREL (156 aa)) is the CP-type G domain. GTP is bound by residues 142–145 (TKAD) and 194–202 (GSSGVGKST). Zn(2+) is bound by residues C275, C280, H282, and C288.

It belongs to the TRAFAC class YlqF/YawG GTPase family. RsgA subfamily. Monomer. Associates with 30S ribosomal subunit, binds 16S rRNA. It depends on Zn(2+) as a cofactor.

It is found in the cytoplasm. Functionally, one of several proteins that assist in the late maturation steps of the functional core of the 30S ribosomal subunit. Helps release RbfA from mature subunits. May play a role in the assembly of ribosomal proteins into the subunit. Circularly permuted GTPase that catalyzes slow GTP hydrolysis, GTPase activity is stimulated by the 30S ribosomal subunit. The protein is Small ribosomal subunit biogenesis GTPase RsgA 2 of Vibrio vulnificus (strain CMCP6).